A 291-amino-acid polypeptide reads, in one-letter code: ATP synthase gamma chain (291 aa).

The protein belongs to the ATPase gamma chain family. In terms of assembly, F-type ATPases have 2 components, CF(1) - the catalytic core - and CF(0) - the membrane proton channel. CF(1) has five subunits: alpha(3), beta(3), gamma(1), delta(1), epsilon(1). CF(0) has three main subunits: a, b and c.

It is found in the cell inner membrane. Its function is as follows. Produces ATP from ADP in the presence of a proton gradient across the membrane. The gamma chain is believed to be important in regulating ATPase activity and the flow of protons through the CF(0) complex. This Persephonella marina (strain DSM 14350 / EX-H1) protein is ATP synthase gamma chain.